The chain runs to 167 residues: Ribosome maturation factor RimM (167 aa).

The PRC barrel domain occupies 93 to 165; that stretch reads KGVYYDFQLI…QVIIDPIPGL (73 aa).

Belongs to the RimM family. As to quaternary structure, binds ribosomal protein uS19.

The protein localises to the cytoplasm. Its function is as follows. An accessory protein needed during the final step in the assembly of 30S ribosomal subunit, possibly for assembly of the head region. Essential for efficient processing of 16S rRNA. May be needed both before and after RbfA during the maturation of 16S rRNA. It has affinity for free ribosomal 30S subunits but not for 70S ribosomes. The polypeptide is Ribosome maturation factor RimM (Dehalococcoides mccartyi (strain ATCC BAA-2266 / KCTC 15142 / 195) (Dehalococcoides ethenogenes (strain 195))).